A 490-amino-acid polypeptide reads, in one-letter code: MVPVVALVGRPNVGKSTLFNRLTRTRDALVADFPGLTRDRKYGRAEVEGREFICIDTGGIDGTEDGVETRMAEQSLLAIEEADIVLFMVDARAGLMPADTAIAKHLRSREKPTFLVANKTDGIDADQAVADFWALGLGEIYPIAASHGRGVTSLLETVLMPWVDEINPPEEIDEDAAYWAQFEEAVEGKEEPVDDFNPQDLPIKLAIVGRPNVGKSTLTNRILGEDRVVVYDMPGTTRDSIYIPMQRDEREYVLIDTAGVRKRGKITDVVEKFSVIKTLQAIEDANVVMLVIDAREGISDQDLSLLGFILNSGRSLVIVVNKWDGLSNDVREQVKEMLDFRLGFIDFARIHFISALHGSGVGNLFESVREAYDSSTRRQSTAMLTRIMTMASEDHQPPLVRGRRVKLKYAHAGGYNPPIVVIHGNQVKDLPDSYKRYLMNYFRKSLDVMGTPIRIQFKEGENPFADKRNTLTPNQMRKRKRLIKHIKKSK.

2 EngA-type G domains span residues 3–166 (PVVA…VDEI) and 203–376 (IKLA…DSST). Residues 9–16 (GRPNVGKS), 56–60 (DTGGI), 118–121 (NKTD), 209–216 (GRPNVGKS), 256–260 (DTAGV), and 321–324 (NKWD) contribute to the GTP site. Residues 377–461 (RRQSTAMLTR…PIRIQFKEGE (85 aa)) enclose the KH-like domain.

Belongs to the TRAFAC class TrmE-Era-EngA-EngB-Septin-like GTPase superfamily. EngA (Der) GTPase family. Associates with the 50S ribosomal subunit.

Functionally, GTPase that plays an essential role in the late steps of ribosome biogenesis. The chain is GTPase Der from Enterobacter sp. (strain 638).